The chain runs to 87 residues: U3-theraphotoxin-Hhn1e (87 aa).

The first 24 residues, 1 to 24 (MVNMKASMFLTFAGLVLLFVVCYA), serve as a signal peptide directing secretion. Residues 25–52 (SESEEKEFPKGMLSSIFAVDNDFKQEER) constitute a propeptide that is removed on maturation. 3 disulfides stabilise this stretch: cysteine 54–cysteine 67, cysteine 61–cysteine 72, and cysteine 66–cysteine 79.

It belongs to the neurotoxin 10 (Hwtx-1) family. 51 (Hntx-8) subfamily. Hntx-8 sub-subfamily. Expressed by the venom gland.

It is found in the secreted. In terms of biological role, ion channel inhibitor. This chain is U3-theraphotoxin-Hhn1e, found in Cyriopagopus hainanus (Chinese bird spider).